The primary structure comprises 336 residues: Palmitoyltransferase PFA3 (336 aa).

Over 1–6 (MNDRLS) the chain is Cytoplasmic. A helical membrane pass occupies residues 7 to 29 (LTSLFPRCLTTCLYIWTAYITLT). At 30–37 (RIHQIPRW) the chain is on the vacuolar side. The helical transmembrane segment at 38–58 (FLALTIVPTLAVALYTYYKVI) threads the bilayer. Residues 59-147 (ARGPGSPLDF…AECTGFRNQK (89 aa)) are Cytoplasmic-facing. A DHHC domain is found at 104-154 (RVCQVCHVWKPDRCHHCSSCDVCILKMDHHCPWFAECTGFRNQKFFIQFLM). The helical transmembrane segment at 148-168 (FFIQFLMYTTLYAFLVLIYTC) threads the bilayer. Residues 169-188 (YELGTWFNSGSFNRELIDFH) lie on the Vacuolar side of the membrane. The helical transmembrane segment at 189 to 209 (LLGVALLAVAVFISVLAFTCF) threads the bilayer. Residues 210–336 (SIYQVCKNQT…RASVEIIDAN (127 aa)) are Cytoplasmic-facing.

The protein belongs to the DHHC palmitoyltransferase family. PFA3 subfamily. In terms of processing, autopalmitoylated.

The protein resides in the vacuole membrane. The catalysed reaction is L-cysteinyl-[protein] + hexadecanoyl-CoA = S-hexadecanoyl-L-cysteinyl-[protein] + CoA. Palmitoyltransferase specific for VAC8. Palmitoylates VAC8 at one or more of its N-terminal cysteine residues, which is required for its proper membrane localization. In Saccharomyces cerevisiae (strain ATCC 204508 / S288c) (Baker's yeast), this protein is Palmitoyltransferase PFA3 (PFA3).